We begin with the raw amino-acid sequence, 233 residues long: Modulator of macroautophagy TMEM150B (233 aa).

Over 1–7 (MWGYLSL) the chain is Cytoplasmic. The chain crosses the membrane as a helical span at residues 8 to 28 (MPVFLAVWAISGVWIVFAIAV). Residues 29–51 (TNRTVDLSKGFPYISICGSFPPQ) are Extracellular-facing. N-linked (GlcNAc...) asparagine glycosylation is present at asparagine 30. A helical transmembrane segment spans residues 52 to 72 (SCIFSQVLNMGAALAAWICIV). The Cytoplasmic portion of the chain corresponds to 73–84 (RYHQLRDWGVRR). Residues 85–105 (WPNQLILWTGLLCALGTSVVG) form a helical membrane-spanning segment. Residues 106 to 116 (NFQEKNQRPTH) lie on the Extracellular side of the membrane. A helical transmembrane segment spans residues 117–137 (LAGAFLAFILGNVYFWLQLLL). The Cytoplasmic segment spans residues 138-155 (WRLKRLPQPGAAWIGPLR). Residues 156 to 176 (LGLCSVCTILIVAMIVLHACS) traverse the membrane as a helical segment. Topologically, residues 177–185 (LRSVSAACE) are extracellular. A helical membrane pass occupies residues 186–206 (WVVAMLLFALFGLLAVDFSAL). Over 207 to 233 (ESCTLCVQPWPSLSPPPASPISLPVQL) the chain is Cytoplasmic.

Belongs to the DRAM/TMEM150 family. Highly expressed in the colon and lung with comparatively high levels also detectable in the lymph nodes, placenta, duodenum, peripheral blood mononuclear cells and spleen.

The protein resides in the cell membrane. The protein localises to the endosome membrane. It localises to the cytoplasmic vesicle. It is found in the autophagosome membrane. Modulator of macroautophagy that causes accumulation of autophagosomes under basal conditions and enhances autophagic flux. Represses cell death and promotes long-term clonogenic survival of cells grown in the absence of glucose in a macroautophagy-independent manner. May have some role in extracellular matrix engulfment or growth factor receptor recycling, both of which can modulate cell survival. This is Modulator of macroautophagy TMEM150B from Homo sapiens (Human).